A 558-amino-acid chain; its full sequence is uncharacterized protein (558 aa).

The segment covering 338 to 354 (STSTSTSTSTSSSNDLN) has biased composition (low complexity). Positions 338–380 (STSTSTSTSTSSSNDLNLDSDSDDSDSDDSDSDSDSDSDSEID) are disordered. Acidic residues predominate over residues 355-380 (LDSDSDDSDSDDSDSDSDSDSDSEID).

Its subcellular location is the plastid. This is an uncharacterized protein from Euglena longa (Euglenophycean alga).